Reading from the N-terminus, the 519-residue chain is (3S,6E)-nerolidol synthase 1 (519 aa).

5 residues coordinate Mg(2+): D273, D277, D417, S421, and E425. The DDXXD motif signature appears at 273 to 277 (DDIFD).

This sequence belongs to the terpene synthase family. Tpsg subfamily. The cofactor is Mg(2+). It depends on Mn(2+) as a cofactor. In terms of tissue distribution, expressed in receptacle tissue. Not detected in leaves or green fruit.

The protein localises to the cytoplasm. It is found in the cytosol. It carries out the reaction (2E,6E)-farnesyl diphosphate + H2O = (3S,6E)-nerolidol + diphosphate. Its pathway is secondary metabolite biosynthesis; terpenoid biosynthesis. Involved in monoterpene (C10) and sesquiterpene (C15) biosynthesis. Converts geranyl diphosphate (GPP) into S-linalool and farnesyl diphosphate (FPP) into (3S)-E-nerolidol. Exclusively present and highly expressed in the fruit of cultivated (octaploid) varieties. The protein is (3S,6E)-nerolidol synthase 1 of Fragaria ananassa (Strawberry).